The following is a 333-amino-acid chain: Tetraacyldisaccharide 4'-kinase (333 aa).

60 to 67 (TVGGTGKT) is an ATP binding site.

The protein belongs to the LpxK family.

The enzyme catalyses a lipid A disaccharide + ATP = a lipid IVA + ADP + H(+). Its pathway is glycolipid biosynthesis; lipid IV(A) biosynthesis; lipid IV(A) from (3R)-3-hydroxytetradecanoyl-[acyl-carrier-protein] and UDP-N-acetyl-alpha-D-glucosamine: step 6/6. Its function is as follows. Transfers the gamma-phosphate of ATP to the 4'-position of a tetraacyldisaccharide 1-phosphate intermediate (termed DS-1-P) to form tetraacyldisaccharide 1,4'-bis-phosphate (lipid IVA). The polypeptide is Tetraacyldisaccharide 4'-kinase (Ectopseudomonas mendocina (strain ymp) (Pseudomonas mendocina)).